A 58-amino-acid polypeptide reads, in one-letter code: Preprotein translocase subunit SecG (58 aa).

Residues 1 to 32 lie on the Cytoplasmic side of the membrane; that stretch reads MAQKKKSSGSGLMSSAGLMTYYDADKKAIHVQ. A helical transmembrane segment spans residues 33–54; it reads PKTVFIFGAICGIVILAFSAGF. Residues 55–58 lie on the Extracellular side of the membrane; that stretch reads GLWP.

The protein belongs to the SEC61-beta family. Component of the protein translocase complex. Heterotrimer consisting of alpha (SecY), beta (SecG) and gamma (SecE) subunits. Can form oligomers of the heterotrimer.

It localises to the cell membrane. Involved in protein export. The function of the beta subunit is unknown, but it may be involved in stabilization of the trimeric complex. This Methanococcoides burtonii (strain DSM 6242 / NBRC 107633 / OCM 468 / ACE-M) protein is Preprotein translocase subunit SecG.